The following is a 242-amino-acid chain: Glucosamine-6-phosphate deaminase (242 aa).

Residue Asp-67 is the Proton acceptor; for enolization step of the active site. Residue Asn-136 is the For ring-opening step of the active site. His-138 acts as the Proton acceptor; for ring-opening step in catalysis. The active-site For ring-opening step is Glu-143.

The protein belongs to the glucosamine/galactosamine-6-phosphate isomerase family. NagB subfamily.

The enzyme catalyses alpha-D-glucosamine 6-phosphate + H2O = beta-D-fructose 6-phosphate + NH4(+). Its pathway is amino-sugar metabolism; N-acetylneuraminate degradation; D-fructose 6-phosphate from N-acetylneuraminate: step 5/5. Its function is as follows. Catalyzes the reversible isomerization-deamination of glucosamine 6-phosphate (GlcN6P) to form fructose 6-phosphate (Fru6P) and ammonium ion. The sequence is that of Glucosamine-6-phosphate deaminase from Clostridium perfringens (strain SM101 / Type A).